Reading from the N-terminus, the 57-residue chain is Large ribosomal subunit protein bL32c (57 aa).

This sequence belongs to the bacterial ribosomal protein bL32 family.

The protein localises to the plastid. It is found in the chloroplast. In Amborella trichopoda, this protein is Large ribosomal subunit protein bL32c.